The primary structure comprises 144 residues: Cytochrome c oxidase subunit 4 isoform 1, mitochondrial (144 aa).

Topologically, residues 1-73 (SVVKSEDFSL…SFAEMNRGSN (73 aa)) are mitochondrial matrix. The residue at position 4 (Lys-4) is an N6-acetyllysine; alternate. The residue at position 4 (Lys-4) is an N6-succinyllysine; alternate. Lys-28 is subject to N6-acetyllysine. Residues Ser-31 and Ser-33 each carry the phosphoserine modification. Position 35 is an N6-acetyllysine; alternate (Lys-35). N6-succinyllysine; alternate is present on Lys-35. At Lys-42 the chain carries N6-acetyllysine. The helical transmembrane segment at 74-99 (EWKTVVGGAMFFIGFTALIIMWQKRH) threads the bilayer. The Mitochondrial intermembrane segment spans residues 100–144 (VYGPLPQSFDKEWVAKQTKRMLDMKVNPIQGLASKWDYEKNEWKK).

Belongs to the cytochrome c oxidase IV family. In terms of assembly, component of the cytochrome c oxidase (complex IV, CIV), a multisubunit enzyme composed of 14 subunits. The complex is composed of a catalytic core of 3 subunits MT-CO1, MT-CO2 and MT-CO3, encoded in the mitochondrial DNA, and 11 supernumerary subunits COX4I, COX5A, COX5B, COX6A, COX6B, COX6C, COX7A, COX7B, COX7C, COX8 and NDUFA4, which are encoded in the nuclear genome. The complex exists as a monomer or a dimer and forms supercomplexes (SCs) in the inner mitochondrial membrane with NADH-ubiquinone oxidoreductase (complex I, CI) and ubiquinol-cytochrome c oxidoreductase (cytochrome b-c1 complex, complex III, CIII), resulting in different assemblies (supercomplex SCI(1)III(2)IV(1) and megacomplex MCI(2)III(2)IV(2)). Interacts with PHB2; the interaction decreases in absence of SPHK2. Interacts with AFG1L. Interacts with ABCB7; this interaction allows the regulation of cellular iron homeostasis and cellular reactive oxygen species (ROS) levels in cardiomyocytes. Interacts with FLVCR2; this interaction occurs in the absence of heme and is disrupted upon heme binding. Interacts with IRGC.

It is found in the mitochondrion inner membrane. It functions in the pathway energy metabolism; oxidative phosphorylation. Its function is as follows. Component of the cytochrome c oxidase, the last enzyme in the mitochondrial electron transport chain which drives oxidative phosphorylation. The respiratory chain contains 3 multisubunit complexes succinate dehydrogenase (complex II, CII), ubiquinol-cytochrome c oxidoreductase (cytochrome b-c1 complex, complex III, CIII) and cytochrome c oxidase (complex IV, CIV), that cooperate to transfer electrons derived from NADH and succinate to molecular oxygen, creating an electrochemical gradient over the inner membrane that drives transmembrane transport and the ATP synthase. Cytochrome c oxidase is the component of the respiratory chain that catalyzes the reduction of oxygen to water. Electrons originating from reduced cytochrome c in the intermembrane space (IMS) are transferred via the dinuclear copper A center (CU(A)) of subunit 2 and heme A of subunit 1 to the active site in subunit 1, a binuclear center (BNC) formed by heme A3 and copper B (CU(B)). The BNC reduces molecular oxygen to 2 water molecules using 4 electrons from cytochrome c in the IMS and 4 protons from the mitochondrial matrix. This chain is Cytochrome c oxidase subunit 4 isoform 1, mitochondrial (COX4I1), found in Pongo pygmaeus (Bornean orangutan).